We begin with the raw amino-acid sequence, 802 residues long: Leucine--tRNA ligase (802 aa).

Positions 40 to 51 (PYPSGAGLHVGH) match the 'HIGH' region motif. Residues 576–580 (KMSKS) carry the 'KMSKS' region motif. Lysine 579 contributes to the ATP binding site.

It belongs to the class-I aminoacyl-tRNA synthetase family.

It is found in the cytoplasm. It carries out the reaction tRNA(Leu) + L-leucine + ATP = L-leucyl-tRNA(Leu) + AMP + diphosphate. The protein is Leucine--tRNA ligase of Bacillus cereus (strain B4264).